The chain runs to 274 residues: MQQLQNVIENAFERRAEITPANADTVTREAVNQVIALLDSGALRVAEKIDGQWVTHQWLKKAVLLSFRINDNKVMDGAETRYYDKVPMKFADYDEARFQKEGFRVVPPATVRQGAFIARNTVLMPSYVNIGAYVDEGSMVDTWATVGSCAQIGKNVHLSGGVGIGGVLEPLQANPTIIEDNCFIGARSEVVEGVIVEEGSVISMGVYLGQSTRIYDRETGEVHYGRVPAGSVVVSGNLPSKDGSYSLYCAVIVKKVDAKTRGKVGINELLRTID.

Positions 104 and 141 each coordinate substrate.

Belongs to the transferase hexapeptide repeat family. Homotrimer.

It localises to the cytoplasm. It catalyses the reaction (S)-2,3,4,5-tetrahydrodipicolinate + succinyl-CoA + H2O = (S)-2-succinylamino-6-oxoheptanedioate + CoA. The protein operates within amino-acid biosynthesis; L-lysine biosynthesis via DAP pathway; LL-2,6-diaminopimelate from (S)-tetrahydrodipicolinate (succinylase route): step 1/3. The sequence is that of 2,3,4,5-tetrahydropyridine-2,6-dicarboxylate N-succinyltransferase from Serratia proteamaculans (strain 568).